Here is a 161-residue protein sequence, read N- to C-terminus: Regulator of ribonuclease activity A (161 aa).

The protein belongs to the RraA family. As to quaternary structure, homotrimer. Binds to both RNA-binding sites in the C-terminal region of Rne and to RhlB.

The protein localises to the cytoplasm. Functionally, globally modulates RNA abundance by binding to RNase E (Rne) and regulating its endonucleolytic activity. Can modulate Rne action in a substrate-dependent manner by altering the composition of the degradosome. Modulates RNA-binding and helicase activities of the degradosome. The protein is Regulator of ribonuclease activity A of Edwardsiella ictaluri (strain 93-146).